The chain runs to 180 residues: Putative manganese efflux pump MntP (180 aa).

6 consecutive transmembrane segments (helical) span residues Phe4 to Gly24, Leu40 to Leu60, Phe64 to Ala84, Leu103 to Ile123, Phe129 to Val149, and Phe156 to Ile176.

It belongs to the MntP (TC 9.B.29) family.

It localises to the cell membrane. In terms of biological role, probably functions as a manganese efflux pump. The chain is Putative manganese efflux pump MntP from Shouchella clausii (strain KSM-K16) (Alkalihalobacillus clausii).